Consider the following 526-residue polypeptide: Peptide chain release factor 3 (526 aa).

Residues 11-277 (SKRRTFAIIS…SLIKWAPSPL (267 aa)) form the tr-type G domain. Residues 20 to 27 (SHPDAGKT), 88 to 92 (DTPGH), and 142 to 145 (NKLD) each bind GTP.

Belongs to the TRAFAC class translation factor GTPase superfamily. Classic translation factor GTPase family. PrfC subfamily.

The protein localises to the cytoplasm. Its function is as follows. Increases the formation of ribosomal termination complexes and stimulates activities of RF-1 and RF-2. It binds guanine nucleotides and has strong preference for UGA stop codons. It may interact directly with the ribosome. The stimulation of RF-1 and RF-2 is significantly reduced by GTP and GDP, but not by GMP. This chain is Peptide chain release factor 3, found in Buchnera aphidicola subsp. Acyrthosiphon pisum (strain 5A).